The following is a 504-amino-acid chain: Glucose-6-phosphate isomerase (504 aa).

Residue glutamate 333 is the Proton donor of the active site. Catalysis depends on residues histidine 364 and lysine 473.

Belongs to the GPI family.

The protein localises to the cytoplasm. The enzyme catalyses alpha-D-glucose 6-phosphate = beta-D-fructose 6-phosphate. It functions in the pathway carbohydrate biosynthesis; gluconeogenesis. It participates in carbohydrate degradation; glycolysis; D-glyceraldehyde 3-phosphate and glycerone phosphate from D-glucose: step 2/4. Catalyzes the reversible isomerization of glucose-6-phosphate to fructose-6-phosphate. The protein is Glucose-6-phosphate isomerase of Stenotrophomonas maltophilia (strain R551-3).